Here is a 186-residue protein sequence, read N- to C-terminus: Elongation factor P (186 aa).

This sequence belongs to the elongation factor P family.

It is found in the cytoplasm. The protein operates within protein biosynthesis; polypeptide chain elongation. Its function is as follows. Involved in peptide bond synthesis. Stimulates efficient translation and peptide-bond synthesis on native or reconstituted 70S ribosomes in vitro. Probably functions indirectly by altering the affinity of the ribosome for aminoacyl-tRNA, thus increasing their reactivity as acceptors for peptidyl transferase. This Shewanella baltica (strain OS223) protein is Elongation factor P.